The following is a 340-amino-acid chain: ATPase get3 (340 aa).

Position 34 to 41 (34 to 41) interacts with ATP; sequence KGGVGKTT. The active site involves aspartate 63. ATP is bound by residues glutamate 242 and asparagine 269. Positions 280 and 283 each coordinate Zn(2+).

Belongs to the arsA ATPase family. As to quaternary structure, homodimer.

It localises to the cytoplasm. It is found in the endoplasmic reticulum. ATPase required for the post-translational delivery of tail-anchored (TA) proteins to the endoplasmic reticulum. Recognizes and selectively binds the transmembrane domain of TA proteins in the cytosol. This complex then targets to the endoplasmic reticulum by membrane-bound receptors, where the tail-anchored protein is released for insertion. This process is regulated by ATP binding and hydrolysis. ATP binding drives the homodimer towards the closed dimer state, facilitating recognition of newly synthesized TA membrane proteins. ATP hydrolysis is required for insertion. Subsequently, the homodimer reverts towards the open dimer state, lowering its affinity for the membrane-bound receptor, and returning it to the cytosol to initiate a new round of targeting. The sequence is that of ATPase get3 (get3) from Sclerotinia sclerotiorum (strain ATCC 18683 / 1980 / Ss-1) (White mold).